We begin with the raw amino-acid sequence, 424 residues long: Anaerobic glycerol-3-phosphate dehydrogenase subunit B (424 aa).

It belongs to the anaerobic G-3-P dehydrogenase subunit B family. Composed of a catalytic GlpA/B dimer and of membrane bound GlpC. Requires FMN as cofactor.

It catalyses the reaction a quinone + sn-glycerol 3-phosphate = dihydroxyacetone phosphate + a quinol. It participates in polyol metabolism; glycerol degradation via glycerol kinase pathway; glycerone phosphate from sn-glycerol 3-phosphate (anaerobic route): step 1/1. Conversion of glycerol 3-phosphate to dihydroxyacetone. Uses fumarate or nitrate as electron acceptor. The sequence is that of Anaerobic glycerol-3-phosphate dehydrogenase subunit B from Yersinia pestis bv. Antiqua (strain Antiqua).